We begin with the raw amino-acid sequence, 378 residues long: Alcohol dehydrogenase class-3 (378 aa).

A1 is modified (N-acetylalanine). C46 contributes to the Zn(2+) binding site. An NAD(+)-binding site is contributed by H47. An alcohol contacts are provided by T48 and H68. The Zn(2+) site is built by H68, E69, C98, C101, C104, C112, and C176. NAD(+) is bound by residues G201–G206, D225, K230, V294–V296, T319–F321, and R371.

It belongs to the zinc-containing alcohol dehydrogenase family. Class-III subfamily. As to quaternary structure, homodimer. Zn(2+) serves as cofactor.

Its subcellular location is the cytoplasm. The catalysed reaction is a primary alcohol + NAD(+) = an aldehyde + NADH + H(+). It carries out the reaction a secondary alcohol + NAD(+) = a ketone + NADH + H(+). The enzyme catalyses S-(hydroxymethyl)glutathione + NADP(+) = S-formylglutathione + NADPH + H(+). It catalyses the reaction S-(hydroxymethyl)glutathione + NAD(+) = S-formylglutathione + NADH + H(+). In terms of biological role, class-III ADH is remarkably ineffective in oxidizing ethanol, but it readily catalyzes the oxidation of long-chain primary alcohols and the oxidation of S-(hydroxymethyl) glutathione. This chain is Alcohol dehydrogenase class-3, found in Pisum sativum (Garden pea).